Here is an 862-residue protein sequence, read N- to C-terminus: MELPATSGLNAQPGNAEGTTASTRPATALSVAERYLEALPLPAEARAALRREAGIEPADKDAVALAKLHRALARLDAAQTASIEGSVPAYASIGSRLDAAYGTPHAGTATPEPAPPLEHDTAGRIHLDTGPEPARRSMVPWPWVLGPIWRARRAIGRLFSGGTAPVPYEQPDSPDPKGIWRFVGARRRLTLLALMIAQTVAATWAMSSVLPYHGHDWLEAIIIALFALLFCWVSAGFWTAITGFLLLAFHGDRFVISRRAAPNAPIPDDARTAIVMPICNEDVQRVFAGLRATYESLQRTGHLEHFDFFVLSDSGDPDIRTAEADAWLHVCRALDGFGRVFYRWRRHRVKRKSGNIDDFCRRWGGRYRYMIVLDADSVMSGDCLTRLVQLMEGAPSAGIIQTAPLAAGRDTLYARIQQFATRVYGPLFTAGLHYWQLGESHYWGHNAIIRLEPFIKHCALAPIPGKGSLSGEIMSHDFVEAALMRRAGWAVWIAYDLDGSYEEMPPNLLDELGRDRRWCHGNLMNFRLFGSPGFHPVHRAVFVTGVMAYLSAPLWFLFLLLSTALLAKHTLIAPEYFTQPRQLFPIWPEWHPEKAAALFSATATVLFLPKILSVLVLWAKGPRRFGGAVHLALSMVIEAVFSVLAAPVRMLFHTRFVTAAFLGWKVHWKSPPRDDAQTHWGDAVRRHGLHTLLGLGWAALVYWLNPSFLWWLSPVVGALIVSILLSVFSSRVTLGRGMRRWRLFMIPEEVRPPRELRAMRKHLRQAPPTPDFRLAVVDPVTNALMCAIGTARFPHDPKLLEVRDATVLQALAAGPDKLTSKQKLVLLSDPLALSALHLAVWSSDVHRAAWLPANALASKAAA.

Residues 1 to 25 (MELPATSGLNAQPGNAEGTTASTRP) form a disordered region. Over residues 7-25 (SGLNAQPGNAEGTTASTRP) the composition is skewed to polar residues. A run of 5 helical transmembrane segments spans residues 188 to 210 (RLTL…SSVL), 545 to 567 (GVMA…ALLA), 597 to 619 (ALFS…VLWA), 626 to 648 (GGAV…AAPV), and 708 to 730 (FLWW…VFSS).

It belongs to the glycosyltransferase 2 family. OpgH subfamily.

It is found in the cell inner membrane. The protein operates within glycan metabolism; osmoregulated periplasmic glucan (OPG) biosynthesis. Its function is as follows. Involved in the biosynthesis of osmoregulated periplasmic glucans (OPGs). The sequence is that of Glucans biosynthesis glucosyltransferase H from Ralstonia nicotianae (strain ATCC BAA-1114 / GMI1000) (Ralstonia solanacearum).